The chain runs to 257 residues: Ribonuclease HII (257 aa).

Residues 70–257 (EFIAGIDEVG…PIKSMVAGGN (188 aa)) enclose the RNase H type-2 domain. 3 residues coordinate a divalent metal cation: Asp76, Glu77, and Asp168.

Belongs to the RNase HII family. Requires Mn(2+) as cofactor. Mg(2+) serves as cofactor.

The protein localises to the cytoplasm. It catalyses the reaction Endonucleolytic cleavage to 5'-phosphomonoester.. Endonuclease that specifically degrades the RNA of RNA-DNA hybrids. This chain is Ribonuclease HII, found in Streptococcus suis (strain 98HAH33).